The chain runs to 201 residues: Cytochrome c biogenesis ATP-binding export protein CcmA (201 aa).

The ABC transporter domain occupies 3-200 (LIAENLGGER…EGAELRMGVA (198 aa)). 35–42 (GPNGSGKS) is a binding site for ATP.

Belongs to the ABC transporter superfamily. CcmA exporter (TC 3.A.1.107) family. In terms of assembly, the complex is composed of two ATP-binding proteins (CcmA) and two transmembrane proteins (CcmB).

It localises to the cell inner membrane. It carries out the reaction heme b(in) + ATP + H2O = heme b(out) + ADP + phosphate + H(+). Part of the ABC transporter complex CcmAB involved in the biogenesis of c-type cytochromes; once thought to export heme, this seems not to be the case, but its exact role is uncertain. Responsible for energy coupling to the transport system. The protein is Cytochrome c biogenesis ATP-binding export protein CcmA of Mesorhizobium japonicum (strain LMG 29417 / CECT 9101 / MAFF 303099) (Mesorhizobium loti (strain MAFF 303099)).